The primary structure comprises 335 residues: L-carnitine dehydrogenase (335 aa).

NAD(+) is bound at residue 29–34 (GTGVIG).

It belongs to the 3-hydroxyacyl-CoA dehydrogenase family. L-carnitine dehydrogenase subfamily. Homodimer.

It localises to the cytoplasm. It catalyses the reaction carnitine + NAD(+) = 3-dehydrocarnitine + NADH + H(+). It participates in amine and polyamine metabolism; carnitine metabolism. In terms of biological role, catalyzes the NAD(+)-dependent oxidation of L-carnitine to 3-dehydrocarnitine. This Streptomyces griseus subsp. griseus (strain JCM 4626 / CBS 651.72 / NBRC 13350 / KCC S-0626 / ISP 5235) protein is L-carnitine dehydrogenase.